Consider the following 702-residue polypeptide: Capsid vertex component 1 (702 aa).

The disordered stretch occupies residues 200 to 244 (MGESGTPTPQASSVSGGAGPAVVGTPDPPISPEEQLTAPGGDTAT). Residues 210–224 (ASSVSGGAGPAVVGT) are compositionally biased toward low complexity.

Belongs to the herpesviridae CVC1 protein family. In terms of assembly, interacts (via C-terminus) with capsid vertex component 2/CVC2.

The protein resides in the virion. Its subcellular location is the host nucleus. Capsid vertex-specific component that plays a role during viral DNA encapsidation, assuring correct genome cleavage and presumably stabilizing capsids that contain full-length viral genomes. This chain is Capsid vertex component 1, found in Homo sapiens (Human).